Reading from the N-terminus, the 287-residue chain is DDRGK domain-containing protein 1 (287 aa).

Residues 1 to 5 (MDLIL) lie on the Lumenal side of the membrane. Residues 6 to 26 (LLGIAVALLVILVTLFFFTKG) form a helical membrane-spanning segment. Topologically, residues 27–287 (KGSQESGKYN…LINLVPVSAE (261 aa)) are cytoplasmic. Disordered stretches follow at residues 28 to 102 (GSQE…KRAK) and 135 to 164 (KVEA…RQEH). Over residues 44–68 (AQAAPRRAQVVRNQRNRARVAAAPA) the composition is skewed to low complexity. Over residues 85–102 (IPHADFNGEKMGAKKRAK) the composition is skewed to basic and acidic residues.

It belongs to the DDRGK1 family. As to quaternary structure, interacts with Atg9; the interaction is transient.

The protein resides in the endoplasmic reticulum membrane. Its function is as follows. Substrate adapter for ufmylation, the covalent attachment of the ubiquitin-like modifier UFM1 to substrate proteins. Required for ufmylation of Atg9; protects the nervous system during aging, possibly by stabilizing Atg9 and supporting its function. The polypeptide is DDRGK domain-containing protein 1 (Culex quinquefasciatus (Southern house mosquito)).